The chain runs to 158 residues: uncharacterized protein (158 aa).

The interval 1–26 (MRASRSPPSPRRCHHHHEATGAASGA) is disordered.

This is an uncharacterized protein from Homo sapiens (Human).